Consider the following 187-residue polypeptide: Potassium-transporting ATPase KdpC subunit (187 aa).

Residues L10–G30 form a helical membrane-spanning segment.

It belongs to the KdpC family. The system is composed of three essential subunits: KdpA, KdpB and KdpC.

The protein resides in the cell inner membrane. In terms of biological role, part of the high-affinity ATP-driven potassium transport (or Kdp) system, which catalyzes the hydrolysis of ATP coupled with the electrogenic transport of potassium into the cytoplasm. This subunit acts as a catalytic chaperone that increases the ATP-binding affinity of the ATP-hydrolyzing subunit KdpB by the formation of a transient KdpB/KdpC/ATP ternary complex. The chain is Potassium-transporting ATPase KdpC subunit from Parvibaculum lavamentivorans (strain DS-1 / DSM 13023 / NCIMB 13966).